Reading from the N-terminus, the 432-residue chain is Adenylosuccinate synthetase (432 aa).

GTP-binding positions include 13 to 19 (GDEGKGK) and 41 to 43 (GHT). The Proton acceptor role is filled by Asp14. Residues Asp14 and Gly41 each contribute to the Mg(2+) site. Residues 14–17 (DEGK), 39–42 (NAGH), Thr130, Arg144, Gln225, Thr240, and Arg304 contribute to the IMP site. His42 serves as the catalytic Proton donor. 300-306 (ATTGRRR) is a binding site for substrate. Residues Arg306, 332–334 (KLD), and 415–417 (STG) contribute to the GTP site.

Belongs to the adenylosuccinate synthetase family. As to quaternary structure, homodimer. It depends on Mg(2+) as a cofactor.

It is found in the cytoplasm. The catalysed reaction is IMP + L-aspartate + GTP = N(6)-(1,2-dicarboxyethyl)-AMP + GDP + phosphate + 2 H(+). The protein operates within purine metabolism; AMP biosynthesis via de novo pathway; AMP from IMP: step 1/2. Plays an important role in the de novo pathway of purine nucleotide biosynthesis. Catalyzes the first committed step in the biosynthesis of AMP from IMP. This is Adenylosuccinate synthetase from Erwinia tasmaniensis (strain DSM 17950 / CFBP 7177 / CIP 109463 / NCPPB 4357 / Et1/99).